The following is a 205-amino-acid chain: Protein Nef (205 aa).

G2 carries N-myristoyl glycine; by host lipidation. S6 is subject to Phosphoserine; by host. Residues 61 to 65 are acidic; interacts with host PACS1 and PACS2; stabilizes the interaction of NEF/MHC-I with host AP1M1; necessary for MHC-I internalization; it reads EESEE. The interval 69–78 is SH3-binding; interaction with Src family tyrosine kinases; sequence PVRPQVPLRP. Positions 72–75 match the PxxP; stabilizes the interaction of NEF/MHC-I with host AP1M1; necessary for MHC-I internalization motif; sequence PQVP. Residues 108 to 124 are mediates dimerization, Nef-PTE1 interaction; the sequence is EILDLWVYHTQGFFPDW. The binding to ATP6V1H stretch occupies residues 148–180; it reads VDPREVEEANTGENNCLLHPMSQHGMDDDEREV. The Dileucine internalization motif; necessary for CD4 internalization signature appears at 164 to 165; that stretch reads LL. The short motif at 174 to 175 is the Diacidic; necessary for CD4 internalization element; the sequence is DD.

It belongs to the lentivirus primate group Nef protein family. In terms of assembly, monomer; cytosolic form. Homodimer; membrane bound form. Interacts with Nef associated p21-activated kinase (PAK2); this interaction activates PAK2. Associates with the Nef-MHC-I-AP1 complex; this complex is required for MHC-I internalization. Interacts (via C-terminus) with host PI3-kinase. Interacts with host PACS1; this interaction seems to be weak. Interacts with host PACS2. Interacts with host LCK and MAPK3; these interactions inhibit the kinase activity of the latter. Interacts with host ATP6V1H; this interaction may play a role in CD4 endocytosis. Associates with the CD4-Nef-AP2 complex; this complex is required for CD4 internalization. Interacts with host AP2 subunit alpha and AP2 subunit sigma2. Interacts with TCR-zeta chain; this interaction up-regulates the Fas ligand (FasL) surface expression. Interacts with host HCK, LYN, and SRC; these interactions activate the Src family kinases. Interacts with MAP3K5; this interaction inhibits the Fas and TNFR-mediated death signals. Interacts with beta-COP and PTE1. Interacts with human RACK1; this increases Nef phosphorylation by PKC. Interacts with TP53; this interaction decreases the half-life of TP53, protecting the infected cell against p53-mediated apoptosis. The virion-associated Nef proteins are cleaved by the viral protease to release the soluble C-terminal core protein. Nef is probably cleaved concomitantly with viral structural proteins on maturation of virus particles. In terms of processing, myristoylated. Post-translationally, phosphorylated on serine residues, probably by host PKCdelta and theta.

It is found in the host cell membrane. The protein resides in the virion. The protein localises to the secreted. Its subcellular location is the host Golgi apparatus membrane. Functionally, factor of infectivity and pathogenicity, required for optimal virus replication. Alters numerous pathways of T-lymphocyte function and down-regulates immunity surface molecules in order to evade host defense and increase viral infectivity. Alters the functionality of other immunity cells, like dendritic cells, monocytes/macrophages and NK cells. In terms of biological role, in infected CD4(+) T-lymphocytes, down-regulates the surface MHC-I, mature MHC-II, CD4, CD28, CCR5 and CXCR4 molecules. Mediates internalization and degradation of host CD4 through the interaction of with the cytoplasmic tail of CD4, the recruitment of AP-2 (clathrin adapter protein complex 2), internalization through clathrin coated pits, and subsequent transport to endosomes and lysosomes for degradation. Diverts host MHC-I molecules to the trans-Golgi network-associated endosomal compartments by an endocytic pathway to finally target them for degradation. MHC-I down-regulation may involve AP-1 (clathrin adapter protein complex 1) or possibly Src family kinase-ZAP70/Syk-PI3K cascade recruited by PACS2. In consequence infected cells are masked for immune recognition by cytotoxic T-lymphocytes. Decreasing the number of immune receptors also prevents reinfection by more HIV particles (superinfection). Down-regulates host SERINC3 and SERINC5 thereby excluding these proteins from the viral particles. Virion infectivity is drastically higher when SERINC3 or SERINC5 are excluded from the viral envelope, because these host antiviral proteins impair the membrane fusion event necessary for subsequent virion penetration. Bypasses host T-cell signaling by inducing a transcriptional program nearly identical to that of anti-CD3 cell activation. Interaction with TCR-zeta chain up-regulates the Fas ligand (FasL). Increasing surface FasL molecules and decreasing surface MHC-I molecules on infected CD4(+) cells send attacking cytotoxic CD8+ T-lymphocytes into apoptosis. Its function is as follows. Plays a role in optimizing the host cell environment for viral replication without causing cell death by apoptosis. Protects the infected cells from apoptosis in order to keep them alive until the next virus generation is ready to strike. Inhibits the Fas and TNFR-mediated death signals by blocking MAP3K5/ASK1. Decreases the half-life of TP53, protecting the infected cell against p53-mediated apoptosis. Inhibits the apoptotic signals regulated by the Bcl-2 family proteins through the formation of a Nef/PI3-kinase/PAK2 complex that leads to activation of PAK2 and induces phosphorylation of host BAD. Functionally, extracellular Nef protein targets CD4(+) T-lymphocytes for apoptosis by interacting with CXCR4 surface receptors. This chain is Protein Nef, found in Human immunodeficiency virus type 1 group M subtype A (isolate Z321) (HIV-1).